The following is a 156-amino-acid chain: 6,7-dimethyl-8-ribityllumazine synthase (156 aa).

5-amino-6-(D-ribitylamino)uracil-binding positions include Phe22, 57–59, and 81–83; these read AYE and TVI. 86–87 contributes to the (2S)-2-hydroxy-3-oxobutyl phosphate binding site; sequence GT. The active-site Proton donor is His89. Phe114 lines the 5-amino-6-(D-ribitylamino)uracil pocket. Arg128 is a (2S)-2-hydroxy-3-oxobutyl phosphate binding site.

The protein belongs to the DMRL synthase family. As to quaternary structure, forms an icosahedral capsid composed of 60 subunits, arranged as a dodecamer of pentamers.

It catalyses the reaction (2S)-2-hydroxy-3-oxobutyl phosphate + 5-amino-6-(D-ribitylamino)uracil = 6,7-dimethyl-8-(1-D-ribityl)lumazine + phosphate + 2 H2O + H(+). It functions in the pathway cofactor biosynthesis; riboflavin biosynthesis; riboflavin from 2-hydroxy-3-oxobutyl phosphate and 5-amino-6-(D-ribitylamino)uracil: step 1/2. Catalyzes the formation of 6,7-dimethyl-8-ribityllumazine by condensation of 5-amino-6-(D-ribitylamino)uracil with 3,4-dihydroxy-2-butanone 4-phosphate. This is the penultimate step in the biosynthesis of riboflavin. The sequence is that of 6,7-dimethyl-8-ribityllumazine synthase from Escherichia coli O45:K1 (strain S88 / ExPEC).